We begin with the raw amino-acid sequence, 695 residues long: Probable serine/threonine-protein kinase DDB_G0279405 (695 aa).

2 disordered regions span residues 119 to 138 (IVAQ…PQPQ) and 149 to 192 (QIPT…KRHK). Residues 124 to 138 (QPQPQPQPQPQPQPQ) show a composition bias toward pro residues. The span at 149-160 (QIPTTPPQQISQ) shows a compositional bias: low complexity. Residues 161–173 (FNITGNKSPSSIG) show a composition bias toward polar residues. The 262-residue stretch at 201 to 462 (YVFVRKLGKG…IAEIKSHKWT (262 aa)) folds into the Protein kinase domain. Residues 207–215 (LGKGTFGKV) and lysine 230 each bind ATP. The active-site Proton acceptor is aspartate 329. Residues 491 to 580 (TDHTIKPSDN…NQNQNNNNNS (90 aa)) are disordered. Residues 510-528 (LSSSSGGESSGIIGSSNES) show a composition bias toward low complexity. The segment covering 529 to 541 (KSMYNNVNSKQKI) has biased composition (polar residues). Residues 542–580 (QNQNQNQNQNQNQNQNQNQNQNHNQNQNQNQNQNNNNNS) are compositionally biased toward low complexity.

The protein belongs to the protein kinase superfamily. Ser/Thr protein kinase family.

It carries out the reaction L-seryl-[protein] + ATP = O-phospho-L-seryl-[protein] + ADP + H(+). The catalysed reaction is L-threonyl-[protein] + ATP = O-phospho-L-threonyl-[protein] + ADP + H(+). This Dictyostelium discoideum (Social amoeba) protein is Probable serine/threonine-protein kinase DDB_G0279405.